A 389-amino-acid polypeptide reads, in one-letter code: 2-aminoethylphosphonate--pyruvate transaminase 1 (389 aa).

The residue at position 196 (Lys-196) is an N6-(pyridoxal phosphate)lysine.

Belongs to the class-V pyridoxal-phosphate-dependent aminotransferase family. PhnW subfamily. As to quaternary structure, homodimer. Pyridoxal 5'-phosphate is required as a cofactor.

The enzyme catalyses (2-aminoethyl)phosphonate + pyruvate = phosphonoacetaldehyde + L-alanine. Its function is as follows. Involved in phosphonate degradation. In Paraburkholderia xenovorans (strain LB400), this protein is 2-aminoethylphosphonate--pyruvate transaminase 1.